An 86-amino-acid polypeptide reads, in one-letter code: UPF0457 protein SAUSA300_2132 (86 aa).

It belongs to the UPF0457 family.

The sequence is that of UPF0457 protein SAUSA300_2132 from Staphylococcus aureus (strain USA300).